Consider the following 238-residue polypeptide: 6-phosphogluconolactonase (238 aa).

It belongs to the glucosamine/galactosamine-6-phosphate isomerase family. 6-phosphogluconolactonase subfamily.

The enzyme catalyses 6-phospho-D-glucono-1,5-lactone + H2O = 6-phospho-D-gluconate + H(+). The protein operates within carbohydrate degradation; pentose phosphate pathway; D-ribulose 5-phosphate from D-glucose 6-phosphate (oxidative stage): step 2/3. Its function is as follows. Hydrolysis of 6-phosphogluconolactone to 6-phosphogluconate. This chain is 6-phosphogluconolactonase (pgl), found in Mesorhizobium japonicum (strain LMG 29417 / CECT 9101 / MAFF 303099) (Mesorhizobium loti (strain MAFF 303099)).